A 548-amino-acid chain; its full sequence is Chaperonin GroEL (548 aa).

ATP contacts are provided by residues 30 to 33, K51, 87 to 91, G415, 479 to 481, and D495; these read TLGP, DGTTT, and NAA. Residues 525–548 are disordered; that stretch reads PKEDKTSDASSSPAGGMGGMGGMM. Residues 539–548 show a composition bias toward gly residues; the sequence is GGMGGMGGMM.

This sequence belongs to the chaperonin (HSP60) family. In terms of assembly, forms a cylinder of 14 subunits composed of two heptameric rings stacked back-to-back. Interacts with the co-chaperonin GroES.

The protein resides in the cytoplasm. The enzyme catalyses ATP + H2O + a folded polypeptide = ADP + phosphate + an unfolded polypeptide.. In terms of biological role, together with its co-chaperonin GroES, plays an essential role in assisting protein folding. The GroEL-GroES system forms a nano-cage that allows encapsulation of the non-native substrate proteins and provides a physical environment optimized to promote and accelerate protein folding. This chain is Chaperonin GroEL, found in Buchnera aphidicola subsp. Rhopalosiphum padi.